A 341-amino-acid polypeptide reads, in one-letter code: Tyrosine recombinase XerC (341 aa).

Residues 14 to 105 (PDAAEALERW…GVRSFFRWAD (92 aa)) enclose the Core-binding (CB) domain. Residues 126-309 (PLPRPLAADD…DAEHLLSVYE (184 aa)) enclose the Tyr recombinase domain. Catalysis depends on residues arginine 169, lysine 193, histidine 261, arginine 264, and histidine 287. Tyrosine 296 acts as the O-(3'-phospho-DNA)-tyrosine intermediate in catalysis.

It belongs to the 'phage' integrase family. XerC subfamily. As to quaternary structure, forms a cyclic heterotetrameric complex composed of two molecules of XerC and two molecules of XerD.

It is found in the cytoplasm. Its function is as follows. Site-specific tyrosine recombinase, which acts by catalyzing the cutting and rejoining of the recombining DNA molecules. The XerC-XerD complex is essential to convert dimers of the bacterial chromosome into monomers to permit their segregation at cell division. It also contributes to the segregational stability of plasmids. This Rhodospirillum centenum (strain ATCC 51521 / SW) protein is Tyrosine recombinase XerC.